The primary structure comprises 764 residues: Kinesin-like protein KIN-14N (764 aa).

The tract at residues 1 to 50 (MSTRATRPGMLHQKENAADAQAGKRQRTAAGSAARAPLSANAAPPAPDPA) is disordered. The span at 29-50 (AAGSAARAPLSANAAPPAPDPA) shows a compositional bias: low complexity. Positions 105 to 416 (AEIGKLNGLL…RLHNTILELK (312 aa)) form a coiled coil. Residues 418–747 (NIRVFCRVRP…LRFAARVNSC (330 aa)) form the Kinesin motor domain. 498–505 (GQTGSGKT) serves as a coordination point for ATP.

Belongs to the TRAFAC class myosin-kinesin ATPase superfamily. Kinesin family. KIN-14 subfamily.

This chain is Kinesin-like protein KIN-14N, found in Oryza sativa subsp. japonica (Rice).